We begin with the raw amino-acid sequence, 280 residues long: Chaperone protein LppX (280 aa).

An N-terminal signal peptide occupies residues 1–18; it reads MRKWLIFLLIAAVAGLSA. C19 carries the N-palmitoyl cysteine lipid modification. C19 carries S-diacylglycerol cysteine lipidation.

It localises to the cell membrane. Functionally, is required for the expression of the adjacently encoded xylanase Xyn11E in an active form. LppX seems to act as a specific chaperone necessary for the correct folding of the xylanase during secretion across the cytoplasmic membrane. The sequence is that of Chaperone protein LppX from Paenibacillus barcinonensis.